The sequence spans 232 residues: DNA repair and recombination protein RadB (232 aa).

The protein belongs to the eukaryotic RecA-like protein family. RadB subfamily.

Functionally, involved in DNA repair and in homologous recombination. May regulate the cleavage reactions of the branch-structured DNA. Has a very weak ATPase activity that is not stimulated by DNA. Binds DNA but does not promote DNA strands exchange. The polypeptide is DNA repair and recombination protein RadB (Methanosphaera stadtmanae (strain ATCC 43021 / DSM 3091 / JCM 11832 / MCB-3)).